The following is a 439-amino-acid chain: Serine hydroxymethyltransferase (439 aa).

(6S)-5,6,7,8-tetrahydrofolate-binding positions include leucine 134 and glycine 138–leucine 140. Lysine 243 carries the N6-(pyridoxal phosphate)lysine modification.

This sequence belongs to the SHMT family. Homodimer. It depends on pyridoxal 5'-phosphate as a cofactor.

Its subcellular location is the cytoplasm. The enzyme catalyses (6R)-5,10-methylene-5,6,7,8-tetrahydrofolate + glycine + H2O = (6S)-5,6,7,8-tetrahydrofolate + L-serine. Its pathway is one-carbon metabolism; tetrahydrofolate interconversion. It functions in the pathway amino-acid biosynthesis; glycine biosynthesis; glycine from L-serine: step 1/1. In terms of biological role, catalyzes the reversible interconversion of serine and glycine with tetrahydrofolate (THF) serving as the one-carbon carrier. This reaction serves as the major source of one-carbon groups required for the biosynthesis of purines, thymidylate, methionine, and other important biomolecules. Also exhibits THF-independent aldolase activity toward beta-hydroxyamino acids, producing glycine and aldehydes, via a retro-aldol mechanism. This chain is Serine hydroxymethyltransferase, found in Brucella anthropi (strain ATCC 49188 / DSM 6882 / CCUG 24695 / JCM 21032 / LMG 3331 / NBRC 15819 / NCTC 12168 / Alc 37) (Ochrobactrum anthropi).